Reading from the N-terminus, the 355-residue chain is Tetraspanin-10 (355 aa).

The disordered stretch occupies residues 1–33 (MEEGERSPLLSQETAGQKPLSVHRPPTSGCLGP). The Cytoplasmic portion of the chain corresponds to 1–78 (MEEGERSPLL…LSPGSSCVKY (78 aa)). The helical transmembrane segment at 79–99 (LIFLSNFPFSLLGLLALAIGL) threads the bilayer. The Extracellular portion of the chain corresponds to 100–120 (WGLAVKGSLGSDLGGPLPTDP). Residues 121–141 (MLGLALGGLVVSAASLAGCLG) traverse the membrane as a helical segment. Residues 142-154 (ALCENTCLLRGFS) are Cytoplasmic-facing. Residues 155-175 (GGILAFLVLEAVAGALVVALW) traverse the membrane as a helical segment. The Extracellular portion of the chain corresponds to 176–355 (GPLQDSLEHT…APPAAKPARG (180 aa)). Disulfide bonds link Cys-212-Cys-279, Cys-213-Cys-243, Cys-229-Cys-237, and Cys-244-Cys-258. Asn-228 carries an N-linked (GlcNAc...) asparagine glycan. The tract at residues 327-355 (YGPGAHGEDRAGPQSPSPGAPPAAKPARG) is disordered. The segment covering 341-355 (SPSPGAPPAAKPARG) has biased composition (pro residues).

Belongs to the tetraspanin (TM4SF) family. Interacts with ADAM10. Expressed in the eye, including iris, ciliary body, retinal pigment epithelium, but not lens (protein level).

It localises to the cell membrane. Part of TspanC8 subgroup, composed of 6 members that interact with the transmembrane metalloprotease ADAM10. This interaction is required for ADAM10 exit from the endoplasmic reticulum and for enzymatic maturation and trafficking to the cell surface as well as substrate specificity. Different TspanC8/ADAM10 complexes have distinct substrates. This is Tetraspanin-10 from Homo sapiens (Human).